Reading from the N-terminus, the 317-residue chain is Probable cell division protein WhiA (317 aa).

The H-T-H motif DNA-binding region spans 267–300 (SLKELGEMLHPPVGKSGVNHRLRRLELIARQVRG).

It belongs to the WhiA family.

In terms of biological role, involved in cell division and chromosome segregation. This chain is Probable cell division protein WhiA, found in Moorella thermoacetica (strain ATCC 39073 / JCM 9320).